A 1032-amino-acid polypeptide reads, in one-letter code: FACT complex subunit ctc-2 (1032 aa).

Positions 446–513 are disordered; sequence DEEEAQPTPK…QKEGLAKYAE (68 aa). A compositionally biased stretch (basic and acidic residues) spans 476–508; that stretch reads LRSERNTTVDEDADKRRREHQKELAQKKQKEGL. Coiled coils occupy residues 485–506, 624–658, 785–805, and 949–1010; these read DEDA…KQKE, DRYA…EQDK, RRRR…IAEA, and EVEE…RKAK. A disordered region spans residues 943–1032; sequence NDSDDDEVEE…ERAAPKKRRK (90 aa). Acidic residues-rich tracts occupy residues 944-979 and 986-1004; these read DSDD…DSEY and EASD…DWDE.

Belongs to the peptidase M24 family. SPT16 subfamily. As to quaternary structure, forms a stable heterodimer with ctc-1/pob3. The dimer of ctc-1 and ctc-2 weakly associates with multiple molecules of nhp-1/nhp6 to form the FACT complex.

It localises to the nucleus. It is found in the chromosome. Its function is as follows. Component of the FACT complex, a general chromatin factor that acts to reorganize nucleosomes. The FACT complex is involved in multiple processes that require DNA as a template such as mRNA elongation, DNA replication and DNA repair. During transcription elongation the FACT complex acts as a histone chaperone that both destabilizes and restores nucleosomal structure. It facilitates the passage of RNA polymerase II and transcription by promoting the dissociation of one histone H2A-H2B dimer from the nucleosome, then subsequently promotes the reestablishment of the nucleosome following the passage of RNA polymerase II. This Neurospora crassa (strain ATCC 24698 / 74-OR23-1A / CBS 708.71 / DSM 1257 / FGSC 987) protein is FACT complex subunit ctc-2 (ctc-2).